The following is a 323-amino-acid chain: Lipoyl synthase (323 aa).

[4Fe-4S] cluster is bound by residues Cys61, Cys66, Cys72, Cys87, Cys91, Cys94, and Ser300. In terms of domain architecture, Radical SAM core spans 73 to 289 (WDKKHATFMI…ETVAYTKGFL (217 aa)).

It belongs to the radical SAM superfamily. Lipoyl synthase family. It depends on [4Fe-4S] cluster as a cofactor.

The protein resides in the cytoplasm. It catalyses the reaction [[Fe-S] cluster scaffold protein carrying a second [4Fe-4S](2+) cluster] + N(6)-octanoyl-L-lysyl-[protein] + 2 oxidized [2Fe-2S]-[ferredoxin] + 2 S-adenosyl-L-methionine + 4 H(+) = [[Fe-S] cluster scaffold protein] + N(6)-[(R)-dihydrolipoyl]-L-lysyl-[protein] + 4 Fe(3+) + 2 hydrogen sulfide + 2 5'-deoxyadenosine + 2 L-methionine + 2 reduced [2Fe-2S]-[ferredoxin]. It participates in protein modification; protein lipoylation via endogenous pathway; protein N(6)-(lipoyl)lysine from octanoyl-[acyl-carrier-protein]: step 2/2. In terms of biological role, catalyzes the radical-mediated insertion of two sulfur atoms into the C-6 and C-8 positions of the octanoyl moiety bound to the lipoyl domains of lipoate-dependent enzymes, thereby converting the octanoylated domains into lipoylated derivatives. This chain is Lipoyl synthase, found in Sinorhizobium medicae (strain WSM419) (Ensifer medicae).